The sequence spans 104 residues: Pyrimidine/purine nucleoside phosphorylase (104 aa).

The protein belongs to the nucleoside phosphorylase PpnP family.

The catalysed reaction is a purine D-ribonucleoside + phosphate = a purine nucleobase + alpha-D-ribose 1-phosphate. The enzyme catalyses adenosine + phosphate = alpha-D-ribose 1-phosphate + adenine. It carries out the reaction cytidine + phosphate = cytosine + alpha-D-ribose 1-phosphate. It catalyses the reaction guanosine + phosphate = alpha-D-ribose 1-phosphate + guanine. The catalysed reaction is inosine + phosphate = alpha-D-ribose 1-phosphate + hypoxanthine. The enzyme catalyses thymidine + phosphate = 2-deoxy-alpha-D-ribose 1-phosphate + thymine. It carries out the reaction uridine + phosphate = alpha-D-ribose 1-phosphate + uracil. It catalyses the reaction xanthosine + phosphate = alpha-D-ribose 1-phosphate + xanthine. Functionally, catalyzes the phosphorolysis of diverse nucleosides, yielding D-ribose 1-phosphate and the respective free bases. Can use uridine, adenosine, guanosine, cytidine, thymidine, inosine and xanthosine as substrates. Also catalyzes the reverse reactions. This Thiobacillus denitrificans (strain ATCC 25259 / T1) protein is Pyrimidine/purine nucleoside phosphorylase.